The sequence spans 425 residues: Type I restriction enzyme MjaVIII specificity subunit (425 aa).

It belongs to the type-I restriction system S methylase family. The type I restriction/modification system is composed of three polypeptides R, M and S.

In terms of biological role, the specificity (S) subunit of a type I restriction enzyme; this subunit dictates DNA sequence specificity. The M and S subunits together form a methyltransferase (MTase) that methylates A-2 on the top and A-3 on the bottom strand of the sequence 5'-GAYN(5)GTAA-3'. In the presence of the R subunit the complex can also act as an endonuclease, binding to the same target sequence but cutting the DNA some distance from this site. Whether the DNA is cut or modified depends on the methylation state of the target sequence. When the target site is unmodified, the DNA is cut. When the target site is hemimethylated, the complex acts as a maintenance MTase modifying the DNA so that both strands become methylated. After locating a non-methylated recognition site, the enzyme complex serves as a molecular motor that translocates DNA in an ATP-dependent manner until a collision occurs that triggers cleavage. The chain is Type I restriction enzyme MjaVIII specificity subunit from Methanocaldococcus jannaschii (strain ATCC 43067 / DSM 2661 / JAL-1 / JCM 10045 / NBRC 100440) (Methanococcus jannaschii).